We begin with the raw amino-acid sequence, 1235 residues long: DNA polymerase (1235 aa).

The region spanning 773 to 887 (LLGYYISSGD…LILLLNSIGV (115 aa)) is the DOD-type homing endonuclease domain.

The protein belongs to the DNA polymerase type-B family. In terms of processing, this protein undergoes a protein self splicing that involves a post-translational excision of the intervening region (intein) followed by peptide ligation.

It carries out the reaction DNA(n) + a 2'-deoxyribonucleoside 5'-triphosphate = DNA(n+1) + diphosphate. In Pyrococcus horikoshii (strain ATCC 700860 / DSM 12428 / JCM 9974 / NBRC 100139 / OT-3), this protein is DNA polymerase (pol).